The primary structure comprises 846 residues: MAVKRLIETFVPENYKIFLDIDRKTKKIKGQVAITGEAKDSVIAFHAKGLHFSKVRAFSVDTNFIENEEDEEIVVKIGETGRVTVSFEYEAELTDNMMGIYPSYYEVNGEKKMLIGTQFESHFARQAFPSIDEPEAKATFDLSVKFDEEEGDIIVSNMPELLNINGIHVFERTVKMSSYLLAFVFGELQFKKGKTKSGVEVGAFATKDHSEAALDFPLDIAIRSIEFYEDYYKTPYPLPHSWHIALPDFSAGAMENWGCITYREVCMLVDPENATIQSKQYVATVIAHELAHQWFGDLVTMQWWDDLWLNESFANNMEYVCMDALEPSWNVWESFSISEANMALNRDATDGVQSVHVEVTHPDEIGTLFDPAIVYAKGSRLMVMLRKWLGDEDFAAGLALYFKRHQYGNTVGDNLWDALAEVSGKDVAAFMHSWVNQPGYPVVTAEVIDDTLVLSQKQFFVGEGADKGRLWNVPLNTNWSGLPDLLSSEKVEIPGFAALKAKNDGKALFLNDANMAHYIIDYKGQLLTDLLSEVETLENVTKFQILQDRKLLAKAGVISYADVVNILPAFTNEESYLVNTGLSQLISELELFVDEDSETEKAFQSLVGKLFAKNYARLGWDKVAGESAGDESLRGIVLSKTLYAENADAKAKASQIFAAHKENLAGIPADIRPIVLNNEIKTTNSAELVKTYRETYVKTSLQEFKRELEGAVALIKDEKVIAELLESFKNADIVKPQDIAFSWFYLLRNDFSQDAAWAWEKANWAFLEEKLGGDMSYDKFVIYPGNTFKTADKLAEYKAFFEPKLENQGLKRSIEMAIKQITARVALIDSQKADVDKSIKEISEKL.

Substrate is bound by residues glutamate 120 and 252–256 (GAMEN). Histidine 288 contacts Zn(2+). Glutamate 289 functions as the Proton acceptor in the catalytic mechanism. 2 residues coordinate Zn(2+): histidine 292 and glutamate 311.

It belongs to the peptidase M1 family. In terms of assembly, monomer. The cofactor is Zn(2+).

It localises to the cytoplasm. The enzyme catalyses Release of an N-terminal amino acid, Xaa-|-Yaa- from a peptide, amide or arylamide. Xaa is preferably Ala, but may be most amino acids including Pro (slow action). When a terminal hydrophobic residue is followed by a prolyl residue, the two may be released as an intact Xaa-Pro dipeptide.. Functionally, aminopeptidase with broad substrate specificity to several peptides. It has more affinity for oligopeptides than for dipeptides. It plays an essential role in the metabolism, it may be involved in nitrogen supply or protein turnover. The sequence is that of Aminopeptidase N (pepN) from Lactococcus lactis subsp. lactis (strain IL1403) (Streptococcus lactis).